The sequence spans 190 residues: Potassium-transporting ATPase KdpC subunit (190 aa).

The chain crosses the membrane as a helical span at residues 6 to 26; it reads PAVFLVLLLTLITGLLYPLLT. The disordered stretch occupies residues 67–88; the sequence is GRPSATSDRPYNPLASSGSNLA. The segment covering 69–88 has biased composition (polar residues); the sequence is PSATSDRPYNPLASSGSNLA.

Belongs to the KdpC family. The system is composed of three essential subunits: KdpA, KdpB and KdpC.

It localises to the cell inner membrane. In terms of biological role, part of the high-affinity ATP-driven potassium transport (or Kdp) system, which catalyzes the hydrolysis of ATP coupled with the electrogenic transport of potassium into the cytoplasm. This subunit acts as a catalytic chaperone that increases the ATP-binding affinity of the ATP-hydrolyzing subunit KdpB by the formation of a transient KdpB/KdpC/ATP ternary complex. This is Potassium-transporting ATPase KdpC subunit from Erwinia tasmaniensis (strain DSM 17950 / CFBP 7177 / CIP 109463 / NCPPB 4357 / Et1/99).